A 663-amino-acid chain; its full sequence is DNA topoisomerase 4 subunit B (663 aa).

ATP is bound by residues Tyr7, Asn47, Asp74, Gly114 to Ala120, and Lys341. A disordered region spans residues Arg386 to Ala416. The segment covering Glu387 to Ser398 has biased composition (basic and acidic residues). Residues Asn424 to Pro538 enclose the Toprim domain. Mg(2+) contacts are provided by Glu430, Asp503, and Asp505.

The protein belongs to the type II topoisomerase family. ParE type 2 subfamily. Heterotetramer composed of ParC and ParE. Mg(2+) serves as cofactor. Requires Mn(2+) as cofactor. It depends on Ca(2+) as a cofactor.

The enzyme catalyses ATP-dependent breakage, passage and rejoining of double-stranded DNA.. In terms of biological role, topoisomerase IV is essential for chromosome segregation. It relaxes supercoiled DNA. Performs the decatenation events required during the replication of a circular DNA molecule. This chain is DNA topoisomerase 4 subunit B, found in Staphylococcus aureus (strain NCTC 8325 / PS 47).